The chain runs to 749 residues: Polyribonucleotide nucleotidyltransferase (749 aa).

Mg(2+)-binding residues include Asp-487 and Asp-493. One can recognise a KH domain in the interval 554–613; the sequence is PSTTTIKIDKDKIRDIIGPGGKIIKEICETSGAKIDISDDGTVSVYASDRDKLKVALDKI. The 69-residue stretch at 623–691 folds into the S1 motif domain; the sequence is GEIFNGTVVK…NKGKAKLTIK (69 aa). The segment at 691 to 749 is disordered; sequence KNADKDKSSNNTKPKTNVNNTNKDNSEPEQRRDSSKKRAWNEDNNAETAEVITERKYFN. A compositionally biased stretch (low complexity) spans 699 to 713; it reads SNNTKPKTNVNNTNK. The span at 714–723 shows a compositional bias: basic and acidic residues; sequence DNSEPEQRRD.

Belongs to the polyribonucleotide nucleotidyltransferase family. Mg(2+) serves as cofactor.

Its subcellular location is the cytoplasm. It catalyses the reaction RNA(n+1) + phosphate = RNA(n) + a ribonucleoside 5'-diphosphate. In terms of biological role, involved in mRNA degradation. Catalyzes the phosphorolysis of single-stranded polyribonucleotides processively in the 3'- to 5'-direction. The sequence is that of Polyribonucleotide nucleotidyltransferase from Rickettsia conorii (strain ATCC VR-613 / Malish 7).